Reading from the N-terminus, the 386-residue chain is Erythronate-4-phosphate dehydrogenase (386 aa).

The substrate site is built by Ser-59 and Thr-81. Asp-162 is a binding site for NAD(+). Arg-239 is a catalytic residue. Residue Asp-262 coordinates NAD(+). Glu-267 is an active-site residue. The active-site Proton donor is His-284. Gly-287 contributes to the NAD(+) binding site. Residue Tyr-288 participates in substrate binding.

It belongs to the D-isomer specific 2-hydroxyacid dehydrogenase family. PdxB subfamily. As to quaternary structure, homodimer.

It localises to the cytoplasm. The catalysed reaction is 4-phospho-D-erythronate + NAD(+) = (R)-3-hydroxy-2-oxo-4-phosphooxybutanoate + NADH + H(+). Its pathway is cofactor biosynthesis; pyridoxine 5'-phosphate biosynthesis; pyridoxine 5'-phosphate from D-erythrose 4-phosphate: step 2/5. In terms of biological role, catalyzes the oxidation of erythronate-4-phosphate to 3-hydroxy-2-oxo-4-phosphonooxybutanoate. The polypeptide is Erythronate-4-phosphate dehydrogenase (Psychrobacter cryohalolentis (strain ATCC BAA-1226 / DSM 17306 / VKM B-2378 / K5)).